The chain runs to 491 residues: Glucose-6-phosphate 1-dehydrogenase (491 aa).

NADP(+)-binding positions include Arg-49, 91–92, and Lys-146; that span reads DV. Substrate contacts are provided by His-176, Lys-180, Glu-214, and Asp-233. His-238 serves as the catalytic Proton acceptor. The substrate site is built by Lys-338 and Lys-343.

This sequence belongs to the glucose-6-phosphate dehydrogenase family.

It catalyses the reaction D-glucose 6-phosphate + NADP(+) = 6-phospho-D-glucono-1,5-lactone + NADPH + H(+). Its pathway is carbohydrate degradation; pentose phosphate pathway; D-ribulose 5-phosphate from D-glucose 6-phosphate (oxidative stage): step 1/3. Functionally, catalyzes the oxidation of glucose 6-phosphate to 6-phosphogluconolactone. The protein is Glucose-6-phosphate 1-dehydrogenase of Buchnera aphidicola subsp. Acyrthosiphon pisum (strain APS) (Acyrthosiphon pisum symbiotic bacterium).